The primary structure comprises 533 residues: T-complex protein 1 subunit delta (533 aa).

Residues 1-26 are disordered; that stretch reads MSAPAAAPAKVLPSRSDFDEKEKEKD. Residues 16–26 show a composition bias toward basic and acidic residues; that stretch reads SDFDEKEKEKD.

The protein belongs to the TCP-1 chaperonin family. As to quaternary structure, heterooligomeric complex of about 850 to 900 kDa that forms two stacked rings, 12 to 16 nm in diameter.

It is found in the cytoplasm. Functionally, molecular chaperone; assists the folding of proteins upon ATP hydrolysis. Known to play a role, in vitro, in the folding of actin and tubulin. The polypeptide is T-complex protein 1 subunit delta (cct4) (Dictyostelium discoideum (Social amoeba)).